Here is a 135-residue protein sequence, read N- to C-terminus: Interleukin-4 (135 aa).

The first 24 residues, 1–24 (MGLTSQLIPALVCLLVCTSHFVHG), serve as a signal peptide directing secretion. 2 cysteine pairs are disulfide-bonded: Cys-48-Cys-85 and Cys-70-Cys-105. Residues Asn-62 and Asn-96 are each glycosylated (N-linked (GlcNAc...) asparagine).

It belongs to the IL-4/IL-13 family.

The protein resides in the secreted. Participates in at least several B-cell activation processes as well as of other cell types. It is a costimulator of DNA-synthesis. It induces the expression of class II MHC molecules on resting B-cells. It enhances both secretion and cell surface expression of IgE and IgG1. It also regulates the expression of the low affinity Fc receptor for IgE (CD23) on both lymphocytes and monocytes. Positively regulates IL31RA expression in macrophages. Stimulates autophagy in dendritic cells by interfering with mTORC1 signaling and through the induction of RUFY4. The chain is Interleukin-4 (IL4) from Ovis aries (Sheep).